Reading from the N-terminus, the 65-residue chain is MVKIKIWSTNVKVLDDFVGKITDIVKKTGVRMDGPIPLPTKRMKIRTMKLPHGEGKKKYEKWEMR.

It belongs to the universal ribosomal protein uS10 family. In terms of assembly, part of the 30S ribosomal subunit.

Functionally, involved in the binding of tRNA to the ribosomes. This is Small ribosomal subunit protein uS10 (rps10) from Desulfurococcus mucosus (Desulfurococcus mobilis).